A 367-amino-acid polypeptide reads, in one-letter code: Epoxide hydrolase 3 (367 aa).

The chain crosses the membrane as a helical span at residues 22–42 (ALVMSLVYLAALVAAFVYSCI). The active-site Nucleophile is aspartate 180. Tyrosine 288 (proton donor) is an active-site residue. The active-site Proton acceptor is the histidine 344.

Belongs to the AB hydrolase superfamily. Epoxide hydrolase family. Predominantly expressed in skin, esophagus, lung and tongue and to a lesser extent in pancreas and eye.

The protein localises to the microsome membrane. The catalysed reaction is an epoxide + H2O = an ethanediol. It carries out the reaction 9,10-epoxyoctadecanoate + H2O = 9,10-dihydroxyoctadecanoate. The enzyme catalyses 9,10-epoxy-(12Z)-octadecenoate + H2O = 9,10-dihydroxy-(12Z)-octadecenoate. It catalyses the reaction 8,9-epoxy-(5Z,11Z,14Z)-eicosatrienoate + H2O = 8,9-dihydroxy-(5Z,11Z,14Z)-eicosatrienoate. The catalysed reaction is 11,12-epoxy-(5Z,8Z,14Z)-eicosatrienoate + H2O = 11,12-dihydroxy-(5Z,8Z,14Z)-eicosatrienoate. It carries out the reaction 14,15-epoxy-(5Z,8Z,11Z)-eicosatrienoate + H2O = 14,15-dihydroxy-(5Z,8Z,11Z)-eicosatrienoate. With respect to regulation, inhibited by 1-(1-acetylpiperidin-4-yl)-3-(4-(trifl uoromethoxy)phenyl)urea (TPAU), 1-cyclohexyl-3-dodecylurea (CDU), 12-(3-adamantan-1-yl-ureido)-dodecanoic acid (AUDA), 1-((3S, 5S, 7S)-adamantan-1-yl)-3-(5-(2-(2-ethoxyethoxy) ethoxy)pentyl)urea (AEPU) and to a lesser extent by 8-(3-((3S, 5S, 7S)-adamantan-1-yl)ureido) octanoic acid (AUOA). Its function is as follows. Catalyzes the hydrolysis of epoxide-containing fatty acids. Active in vitro against epoxyeicosatrienoic acids (EETs) including 8,9-EET, 9,10-EET, 11,12-EET and 14,15-EET and leukotoxin. The polypeptide is Epoxide hydrolase 3 (Ephx3) (Mus musculus (Mouse)).